A 177-amino-acid chain; its full sequence is Adenylate kinase (177 aa).

13–18 is an ATP binding site; sequence GCGKGT. The segment at 33-62 is NMP; the sequence is SSGDIIREEMKKSSKEATVIREMVNSGRLA. AMP is bound by residues Ser-34, Arg-39, 60 to 62, 85 to 88, and Gln-92; these read RLA and GYPR. The tract at residues 119 to 127 is LID; the sequence is GRNEGRDDD. Position 120 (Arg-120) interacts with ATP. Arg-124 and Arg-135 together coordinate AMP.

It belongs to the adenylate kinase family. In terms of assembly, monomer.

Its subcellular location is the cytoplasm. The enzyme catalyses AMP + ATP = 2 ADP. Catalyzes the reversible transfer of the terminal phosphate group between ATP and AMP. Plays an important role in cellular energy homeostasis and in adenine nucleotide metabolism. In Encephalitozoon cuniculi (strain GB-M1) (Microsporidian parasite), this protein is Adenylate kinase.